The chain runs to 215 residues: MLAFSDMNTGAGKIENGKKALKIVVVGDGAVGKTCLLLAFSKGEIPTAYVPTVFENFSHVMKYKNEEFILHLWDTAGQEEYDRLRPLSYADSDVVLLCFAVNNRTSFDNISTKWEPEIKHYIDTAKTVLVGLKVDLRKDGSDDVTKQEGDDLCQKLGCVAYIEASSVAKIGLNEVFEKSVDCIFSNKPVPKASVTTQAKSQESTQQKKKSKCLLQ.

Residues alanine 30, valine 31, glycine 32, lysine 33, threonine 34, and cysteine 35 each contribute to the GTP site. Residue threonine 34 coordinates Mg(2+). Short sequence motifs (switch) lie at residues 43-54 (GEIPTAYVPTVF) and 74-93 (DTAG…ADSD). Residue threonine 52 participates in Mg(2+) binding. GTP contacts are provided by aspartate 135 and serine 166. The tract at residues 194 to 215 (VTTQAKSQESTQQKKKSKCLLQ) is disordered. Low complexity predominate over residues 195–204 (TTQAKSQEST). A compositionally biased stretch (basic residues) spans 206–215 (QKKKSKCLLQ). The residue at position 212 (cysteine 212) is a Cysteine methyl ester. A lipid anchor (S-geranylgeranyl cysteine) is attached at cysteine 212. A propeptide spans 213-215 (LLQ) (removed in mature form).

It belongs to the small GTPase superfamily. Rho family. In terms of assembly, interacts (GTP-bound form) with formin1 (via GBD/FH3 domain); the interaction activates formin1. Interacts (GTP-bound form) with profilin1. Interacts (GDP-bound form and when prenylated) with RhoGDI. It depends on Mg(2+) as a cofactor.

The protein resides in the cell membrane. Its subcellular location is the cytoplasm. It is found in the cytoskeleton. It localises to the cell projection. The protein localises to the phagocytic cup. The protein resides in the cytoplasmic vesicle. Its subcellular location is the phagosome. The catalysed reaction is GTP + H2O = GDP + phosphate + H(+). With respect to regulation, regulated by guanine nucleotide exchange factors (GEFs) which promote the exchange of bound GDP for free GTP, GTPase activating proteins (GAPs) which increase the GTP hydrolysis activity and GDP dissociation inhibitors which inhibit the dissociation of the nucleotide from the GTPase. Functionally, small GTPase which cycles between active GTP-bound and inactive GDP-bound states. Involved in actin cytoskeleton remodeling. Regulates phagocytosis by modulating actin cytoskeleton dynamics through the recruitment of formin1 and profilin1 to the phagocytosis nucleation site. The polypeptide is Ras-like GTP-binding protein RHO1 (Entamoeba histolytica (strain ATCC 30459 / HM-1:IMSS / ABRM)).